A 529-amino-acid polypeptide reads, in one-letter code: MARFPKADLAAAGVMLLCHFFTDQFQFADGKPGDQILDWQYGVTQAFPHTEEEVEVDSHAYSHRWKRNLDFLKAVDTNRASVGQDSPEPRSFTDLLLDDGQDNNTQIEEDTDHNYYISRIYGPSDSASRDLWVNIDQMEKDKVKIHGILSNTHRQAARVNLSFDFPFYGHFLREITVATGGFIYTGEVVHRMLTATQYIAPLMANFDPSVSRNSTVRYFDNGTALVVQWDHVHLQDNYNLGSFTFQATLLMDGRIIFGYKEIPVLVTQISSTNHPVKVGLSDAFVVVHRIQQIPNVRRRTIYEYHRVELQMSKITNISAVEMTPLPTCLQFNRCGPCVSSQIGFNCSWCSKLQRCSSGFDRHRQDWVDSGCPEESKEKMCENTEPVETSSRTTTTVGATTTQFRVLTTTRRAVTSQFPTSLPTEDDTKIALHLKDNGASTDDSAAEKKGGTLHAGLIIGILILVLIVATAILVTVYMYHHPTSAASIFFIERRPSRWPAMKFRRGSGHPAYAEVEPVGEKEGFIVSEQC.

Positions 1-30 (MARFPKADLAAAGVMLLCHFFTDQFQFADG) are cleaved as a signal peptide. Topologically, residues 31 to 454 (KPGDQILDWQ…AEKKGGTLHA (424 aa)) are extracellular. Positions 80–104 (ASVGQDSPEPRSFTDLLLDDGQDNN) are disordered. N103 and N160 each carry an N-linked (GlcNAc...) asparagine glycan. In terms of domain architecture, PSI spans 327–372 (TCLQFNRCGPCVSSQIGFNCSWCSKLQRCSSGFDRHRQDWVDSGCP). Residues 455-475 (GLIIGILILVLIVATAILVTV) traverse the membrane as a helical segment. At 476-529 (YMYHHPTSAASIFFIERRPSRWPAMKFRRGSGHPAYAEVEPVGEKEGFIVSEQC) the chain is on the cytoplasmic side. The residue at position 506 (S506) is a Phosphoserine.

This sequence belongs to the plexin family. Interacts with CTTN. As to expression, expressed in the endothelial cells of the stroma but not in the endothelial cells of normal colonic tissue.

It localises to the membrane. Functionally, may play a role in tumor angiogenesis. The chain is Plexin domain-containing protein 2 (PLXDC2) from Homo sapiens (Human).